A 496-amino-acid chain; its full sequence is RNA-binding motif protein, Y chromosome, family 1 member A1 (496 aa).

The RRM domain occupies 8 to 85 (GKLFIGGLNR…KAIKVEQAKK (78 aa)). Disordered stretches follow at residues 78 to 349 (IKVE…HRDY) and 452 to 496 (KDQR…SSRY). 2 stretches are compositionally biased toward low complexity: residues 97–114 (PASS…SARG) and 149–159 (PVKRGPSSRSG). Polar residues predominate over residues 175 to 184 (NSWMGSQGPM). Composition is skewed to basic and acidic residues over residues 204-214 (RNDRMSTRHDG), 242-253 (DNGHSNRDEHSS), 276-289 (AYRD…DESY), 313-326 (GYRD…HESY), 335-349 (SSRE…HRDY), and 484-496 (GESR…SSRY).

In terms of assembly, interacts with splicing factor proteins SFRS3/SRP20, TRA2B/SFRS10, KHDRBS1/SAM68 and KHDRBS3. As to expression, testis-specific.

The protein resides in the nucleus. RNA-binding protein involved in pre-mRNA splicing. Required for sperm development. Acts additively with TRA2B to promote exon 7 inclusion of the survival motor neuron SMN. Binds non-specifically to mRNAs. The sequence is that of RNA-binding motif protein, Y chromosome, family 1 member A1 (RBMY1A1) from Homo sapiens (Human).